Here is a 78-residue protein sequence, read N- to C-terminus: UPF0270 protein YPO0179/y3960/YP_0178 (78 aa).

The protein belongs to the UPF0270 family.

This is UPF0270 protein YPO0179/y3960/YP_0178 from Yersinia pestis.